We begin with the raw amino-acid sequence, 910 residues long: DnaJ-like protein MG200 homolog (910 aa).

Residues 4–73 (AKRDYYEVLG…RANYDKYGHD (70 aa)) enclose the J domain. 3 disordered regions span residues 102 to 160 (DNLS…DDIP), 260 to 408 (TEPS…LEQD), and 451 to 486 (VLSDQNPNPQTPTHHEEDAAAPEPTVDETSGESTAP). Residues 111–121 (KKEKTKTKKKG) are compositionally biased toward basic residues. Residues 273 to 283 (DSDAVTAATTV) show a composition bias toward low complexity. The span at 357 to 379 (SDEADATNEPTEQDTISEPEQET) shows a compositional bias: acidic residues. Over residues 451-462 (VLSDQNPNPQTP) the composition is skewed to polar residues.

In Mycoplasma pneumoniae (strain ATCC 29342 / M129 / Subtype 1) (Mycoplasmoides pneumoniae), this protein is DnaJ-like protein MG200 homolog.